Here is a 140-residue protein sequence, read N- to C-terminus: Nucleoside diphosphate kinase (140 aa).

6 residues coordinate ATP: K11, F59, R87, T93, R104, and N114. The active-site Pros-phosphohistidine intermediate is H117.

It belongs to the NDK family. Homotetramer. The cofactor is Mg(2+).

It is found in the cytoplasm. The enzyme catalyses a 2'-deoxyribonucleoside 5'-diphosphate + ATP = a 2'-deoxyribonucleoside 5'-triphosphate + ADP. It catalyses the reaction a ribonucleoside 5'-diphosphate + ATP = a ribonucleoside 5'-triphosphate + ADP. Major role in the synthesis of nucleoside triphosphates other than ATP. The ATP gamma phosphate is transferred to the NDP beta phosphate via a ping-pong mechanism, using a phosphorylated active-site intermediate. This Agrobacterium fabrum (strain C58 / ATCC 33970) (Agrobacterium tumefaciens (strain C58)) protein is Nucleoside diphosphate kinase.